We begin with the raw amino-acid sequence, 343 residues long: Anthranilate phosphoribosyltransferase (343 aa).

5-phospho-alpha-D-ribose 1-diphosphate contacts are provided by residues glycine 84, glycine 87 to aspartate 88, threonine 92, asparagine 94 to threonine 97, lysine 112 to serine 120, and serine 124. Glycine 84 is an anthranilate binding site. Position 96 (serine 96) interacts with Mg(2+). Asparagine 115 contacts anthranilate. Arginine 170 is an anthranilate binding site. Residues aspartate 229 and glutamate 230 each coordinate Mg(2+).

It belongs to the anthranilate phosphoribosyltransferase family. As to quaternary structure, homodimer. Mg(2+) serves as cofactor.

It catalyses the reaction N-(5-phospho-beta-D-ribosyl)anthranilate + diphosphate = 5-phospho-alpha-D-ribose 1-diphosphate + anthranilate. The protein operates within amino-acid biosynthesis; L-tryptophan biosynthesis; L-tryptophan from chorismate: step 2/5. Its function is as follows. Catalyzes the transfer of the phosphoribosyl group of 5-phosphorylribose-1-pyrophosphate (PRPP) to anthranilate to yield N-(5'-phosphoribosyl)-anthranilate (PRA). This is Anthranilate phosphoribosyltransferase from Burkholderia orbicola (strain MC0-3).